A 431-amino-acid polypeptide reads, in one-letter code: MSSSRSGLTRVLVAVATALVSSSTPCPQAWGPPGVQYGQPGRPVMLCCPGVNAGTPVSWFRDGDSRLLQGPDSGLGHRLVLAQVDSRDEGTYVCRTLDGVFGGMVTLKLGSPPARPEVSCQAVDYENFSCTWSPGRVSGLPTRYLTSYRKKTLPGAESQRESPSTGPWPCPQDPLEASRCVVHGAEFWSEYRINVTEVNPLGASTCLLDVRLQRILRPDPPQGLRVESVPGYPRRLHASWTYPASWRRQPHFLLKFRLQYRPAQHPAWSTVEPIGLEELITDAVAGLPHAVRVSARDFLDAGTWSAWSPEAWGTPSTGPLRDEVPDGSRGHEQKLEAAAQEDSPAPPSPSLQPDPRPLDHRDPLEQVAVLASLGIFSFLGLAVGALALGLWLRLRRSGKDGPQKPGFLAPMIPGDKLPGIPNLQRTPENFS.

An N-terminal signal peptide occupies residues 1 to 23 (MSSSRSGLTRVLVAVATALVSSS). The Extracellular segment spans residues 24–371 (TPCPQAWGPP…DPLEQVAVLA (348 aa)). The region spanning 27–110 (PQAWGPPGVQ…FGGMVTLKLG (84 aa)) is the Ig-like C2-type domain. 3 cysteine pairs are disulfide-bonded: Cys48–Cys94, Cys120–Cys130, and Cys170–Cys180. Fibronectin type-III domains follow at residues 112 to 219 (PPAR…LRPD) and 220 to 317 (PPQG…TPST). Asn127 carries N-linked (GlcNAc...) asparagine glycosylation. The segment at 151–170 (KTLPGAESQRESPSTGPWPC) is disordered. Asn194 is a glycosylation site (N-linked (GlcNAc...) asparagine). The WSXWS motif motif lies at 304 to 308 (WSAWS). The interval 310–360 (EAWGTPSTGPLRDEVPDGSRGHEQKLEAAAQEDSPAPPSPSLQPDPRPLDH) is disordered. Basic and acidic residues predominate over residues 320–335 (LRDEVPDGSRGHEQKL). Residues 344-355 (PAPPSPSLQPDP) are compositionally biased toward pro residues. The chain crosses the membrane as a helical span at residues 372–392 (SLGIFSFLGLAVGALALGLWL). The Cytoplasmic segment spans residues 393 to 431 (RLRRSGKDGPQKPGFLAPMIPGDKLPGIPNLQRTPENFS). The disordered stretch occupies residues 402-431 (PQKPGFLAPMIPGDKLPGIPNLQRTPENFS).

The protein belongs to the type I cytokine receptor family. Type 3 subfamily. In terms of assembly, on IL11 binding, forms a multimer complex with IL6ST/gp130. Post-translationally, a short soluble form is also released from the membrane by proteolysis. The sIL11RA is formed either by limited proteolysis of membrane-bound receptors, a process referred to as ectodomain shedding, or directly secreted from the cells after alternative mRNA splicing. mIL11RA is cleaved by the proteases ADAM10, ELANE and PRTN3.

It localises to the membrane. The protein resides in the secreted. In terms of biological role, receptor for interleukin-11 (IL11). The receptor systems for IL6, LIF, OSM, CNTF, IL11 and CT1 can utilize IL6ST for initiating signal transmission. The IL11/IL11RA/IL6ST complex may be involved in the control of proliferation and/or differentiation of skeletogenic progenitor or other mesenchymal cells. Essential for the normal development of craniofacial bones and teeth. Restricts suture fusion and tooth number. Its function is as follows. Soluble form of IL11 receptor (sIL11RA) that acts as an agonist of IL11 activity. The IL11:sIL11RA complex binds to IL6ST/gp130 on cell surfaces and induces signaling also on cells that do not express membrane-bound IL11RA in a process called IL11 trans-signaling. This chain is Interleukin-11 receptor subunit alpha, found in Rattus norvegicus (Rat).